Consider the following 219-residue polypeptide: Deoxyribose-phosphate aldolase (219 aa).

The active-site Proton donor/acceptor is the Asp-92. Catalysis depends on Lys-154, which acts as the Schiff-base intermediate with acetaldehyde. Lys-183 functions as the Proton donor/acceptor in the catalytic mechanism.

Belongs to the DeoC/FbaB aldolase family. DeoC type 1 subfamily.

The protein resides in the cytoplasm. It catalyses the reaction 2-deoxy-D-ribose 5-phosphate = D-glyceraldehyde 3-phosphate + acetaldehyde. It participates in carbohydrate degradation; 2-deoxy-D-ribose 1-phosphate degradation; D-glyceraldehyde 3-phosphate and acetaldehyde from 2-deoxy-alpha-D-ribose 1-phosphate: step 2/2. Its function is as follows. Catalyzes a reversible aldol reaction between acetaldehyde and D-glyceraldehyde 3-phosphate to generate 2-deoxy-D-ribose 5-phosphate. This chain is Deoxyribose-phosphate aldolase, found in Dictyoglomus turgidum (strain DSM 6724 / Z-1310).